Here is a 377-residue protein sequence, read N- to C-terminus: MFNPHALDSPAVIFDNGSGFCKAGLSGEFGPRHMVSSIVGHLKFQAPSAEANQKKYFVGEEALYKQEALQLHSPFERGLITGWDDVERLWKHLFEWELGVKPSDQPLLATEPSLNPRENREKMAEVMFENFGVPAFYLSDQAVLALYASACVTGLVVDSGDAVTCTVPIFEGYSLPHAVTKLHVAGRDITELLMQLLLASGHTFPCQLDKGLVDDIKKKLCYVALEPEKELSRRPEEVLREYKLPDGNIISLGDPLHQAPEALFVPQQLGSQSPGLSNMVSSSITKCDTDIQKILFGEIVLSGGTTLFHGLDDRLLKELEQLASKDTPIKITAPPDRWFSTWIGASIVTSLSSFKQMWVTAADFKEFGTSVVQRRCF.

It belongs to the actin family.

The protein localises to the cytoplasm. It is found in the cytoskeleton. The sequence is that of Actin-related protein T2 (ACTRT2) from Homo sapiens (Human).